Reading from the N-terminus, the 282-residue chain is BTB/POZ domain-containing protein At3g56230 (282 aa).

Basic and acidic residues predominate over residues 40–50 (GSKEDRHDKSN). A disordered region spans residues 40-66 (GSKEDRHDKSNHNSTINNGSSISSSPL). Over residues 51–64 (HNSTINNGSSISSS) the composition is skewed to low complexity. Residues 111–181 (ADILLKPGDD…LYTGTLASDK (71 aa)) enclose the BTB domain.

It functions in the pathway protein modification; protein ubiquitination. Functionally, may act as a substrate-specific adapter of an E3 ubiquitin-protein ligase complex (CUL3-RBX1-BTB) which mediates the ubiquitination and subsequent proteasomal degradation of target proteins. The sequence is that of BTB/POZ domain-containing protein At3g56230 from Arabidopsis thaliana (Mouse-ear cress).